The chain runs to 345 residues: NADPH dehydrogenase (345 aa).

23 to 26 (SPMC) serves as a coordination point for FMN. Residue Tyr-28 participates in substrate binding. 2 residues coordinate FMN: Ala-60 and Gln-102. 164 to 167 (HGAH) is a binding site for substrate. Residues Arg-215 and 307–308 (GR) contribute to the FMN site.

This sequence belongs to the NADH:flavin oxidoreductase/NADH oxidase family. NamA subfamily. In terms of assembly, homotetramer. Requires FMN as cofactor.

It catalyses the reaction A + NADPH + H(+) = AH2 + NADP(+). Catalyzes the reduction of the double bond of an array of alpha,beta-unsaturated aldehydes and ketones. It also reduces the nitro group of nitroester and nitroaromatic compounds. It could have a role in detoxification processes. The chain is NADPH dehydrogenase from Bacillus cereus (strain ATCC 10987 / NRS 248).